We begin with the raw amino-acid sequence, 642 residues long: 1-deoxy-D-xylulose-5-phosphate synthase 2 (642 aa).

Thiamine diphosphate contacts are provided by residues His73 and 113–115 (SHA). Asp144 is a binding site for Mg(2+). Thiamine diphosphate is bound by residues 145-146 (GA), Asn174, Tyr285, and Glu366. Asn174 contacts Mg(2+).

It belongs to the transketolase family. DXPS subfamily. As to quaternary structure, homodimer. The cofactor is Mg(2+). Requires thiamine diphosphate as cofactor.

It carries out the reaction D-glyceraldehyde 3-phosphate + pyruvate + H(+) = 1-deoxy-D-xylulose 5-phosphate + CO2. Its pathway is metabolic intermediate biosynthesis; 1-deoxy-D-xylulose 5-phosphate biosynthesis; 1-deoxy-D-xylulose 5-phosphate from D-glyceraldehyde 3-phosphate and pyruvate: step 1/1. Its function is as follows. Catalyzes the acyloin condensation reaction between C atoms 2 and 3 of pyruvate and glyceraldehyde 3-phosphate to yield 1-deoxy-D-xylulose-5-phosphate (DXP). The chain is 1-deoxy-D-xylulose-5-phosphate synthase 2 from Streptomyces coelicolor (strain ATCC BAA-471 / A3(2) / M145).